The sequence spans 182 residues: Large ribosomal subunit protein uL16 (182 aa).

A disordered region spans residues 140 to 182 (EKPTQVGKAPPKSSFLPSDETETAAAQAGTEASSASSVTPLES). The segment covering 162–176 (TAAAQAGTEASSASS) has biased composition (low complexity).

It belongs to the universal ribosomal protein uL16 family. In terms of assembly, part of the 50S ribosomal subunit.

Its function is as follows. Binds 23S rRNA and is also seen to make contacts with the A and possibly P site tRNAs. The protein is Large ribosomal subunit protein uL16 of Prochlorococcus marinus (strain SARG / CCMP1375 / SS120).